A 234-amino-acid polypeptide reads, in one-letter code: Phosphoglycolate phosphatase (234 aa).

Catalysis depends on aspartate 8, which acts as the Nucleophile. Residues aspartate 8 and aspartate 10 each coordinate Mg(2+). Residue lysine 155 coordinates substrate. Residues aspartate 178 and aspartate 182 each contribute to the Mg(2+) site.

The protein belongs to the archaeal SPP-like hydrolase family. It depends on Mg(2+) as a cofactor.

The catalysed reaction is 2-phosphoglycolate + H2O = glycolate + phosphate. Functionally, catalyzes the dephosphorylation of 2-phosphoglycolate. The sequence is that of Phosphoglycolate phosphatase from Thermococcus sibiricus (strain DSM 12597 / MM 739).